The sequence spans 684 residues: Pentatricopeptide repeat-containing protein At4g14850 (684 aa).

PPR repeat units follow at residues 5 to 39 (SADA…LDSP), 41 to 71 (PPFL…TPAR), 72 to 106 (NVVS…GVVP), 107 to 141 (NDFT…GRIL), 142 to 172 (DVFV…IPER), 173 to 207 (NLET…DGHP), 208 to 242 (NSIT…GFDT), 243 to 277 (DVSV…NAVS), 278 to 308 (WCSL…IVET), 309 to 343 (SDFM…CVER), 344 to 374 (TIFV…MPEK), 375 to 409 (NLVT…GCGP), 412 to 442 (NYMT…MRST), and 448 to 478 (GAEH…MPIQ). The interval 483 to 558 (VWGALQNACR…GAGYSWITVK (76 aa)) is type E motif; degenerate. Residues 559 to 589 (NQVHAFQAKDRSHILNKEIQTTLAKLRNEME) are type E(+) motif; degenerate. Residues 590–684 (AAGYKPDLKL…DGICSCKDYW (95 aa)) form a type DYW motif region.

Belongs to the PPR family. PCMP-H subfamily.

Functionally, acts as a regulatory factor of isoprenoid biosynthesis. Could bind RNA. This is Pentatricopeptide repeat-containing protein At4g14850 (LOI1) from Arabidopsis thaliana (Mouse-ear cress).